Here is a 408-residue protein sequence, read N- to C-terminus: G patch domain-containing protein 4 (408 aa).

At methionine 1 the chain carries N-acetylmethionine. At threonine 4 the chain carries Phosphothreonine. In terms of domain architecture, G-patch spans 11–57 (GMKFAEEQLLKHGWTQGKGLGRKENGITQALRVTLKQDTYGVGHDPA). Residue lysine 46 forms a Glycyl lysine isopeptide (Lys-Gly) (interchain with G-Cter in SUMO2) linkage. Threonine 116 carries the phosphothreonine modification. Disordered stretches follow at residues 116–141 (TSSG…KPPN) and 187–408 (GQDP…KKRD). Phosphoserine is present on residues serine 128 and serine 130. 3 stretches are compositionally biased toward basic and acidic residues: residues 222–236 (RSAE…ESIR), 245–257 (HQEE…REGT), and 274–283 (LKNREHVDRS). Residues 340–354 (EEDLNTEDEEVEEAL) are compositionally biased toward acidic residues. Basic and acidic residues predominate over residues 358–372 (GTREAESRSCSDQKR). The span at 398–408 (KAKKKKQKKRD) shows a compositional bias: basic residues.

In Bos taurus (Bovine), this protein is G patch domain-containing protein 4 (GPATCH4).